The following is a 449-amino-acid chain: Tubulin alpha chain (449 aa).

GTP contacts are provided by glutamine 11, glutamate 71, serine 140, glycine 144, threonine 145, threonine 179, asparagine 206, and asparagine 228. Glutamate 71 provides a ligand contact to Mg(2+). Residue glutamate 254 is part of the active site.

It belongs to the tubulin family. Dimer of alpha and beta chains. A typical microtubule is a hollow water-filled tube with an outer diameter of 25 nm and an inner diameter of 15 nM. Alpha-beta heterodimers associate head-to-tail to form protofilaments running lengthwise along the microtubule wall with the beta-tubulin subunit facing the microtubule plus end conferring a structural polarity. Microtubules usually have 13 protofilaments but different protofilament numbers can be found in some organisms and specialized cells. It depends on Mg(2+) as a cofactor.

It localises to the cytoplasm. The protein localises to the cytoskeleton. It catalyses the reaction GTP + H2O = GDP + phosphate + H(+). Its function is as follows. Tubulin is the major constituent of microtubules, a cylinder consisting of laterally associated linear protofilaments composed of alpha- and beta-tubulin heterodimers. Microtubules grow by the addition of GTP-tubulin dimers to the microtubule end, where a stabilizing cap forms. Below the cap, tubulin dimers are in GDP-bound state, owing to GTPase activity of alpha-tubulin. The sequence is that of Tubulin alpha chain (TUB1) from Gibberella zeae (strain ATCC MYA-4620 / CBS 123657 / FGSC 9075 / NRRL 31084 / PH-1) (Wheat head blight fungus).